The sequence spans 70 residues: Beta-defensin 43 (70 aa).

The first 22 residues, Met-1 to Ser-22, serve as a signal peptide directing secretion. Cystine bridges form between Cys-29–Cys-57 and Cys-36–Cys-50.

The protein belongs to the beta-defensin family.

The protein localises to the secreted. Functionally, has bactericidal activity. In Rattus norvegicus (Rat), this protein is Beta-defensin 43 (Defb43).